A 708-amino-acid polypeptide reads, in one-letter code: Radial spoke head protein 6 homolog A (708 aa).

Disordered stretches follow at residues methionine 1–proline 94, glutamate 376–lysine 407, glutamate 495–asparagine 514, and glycine 663–aspartate 708. The segment covering proline 10–leucine 32 has biased composition (polar residues). Residues arginine 47–glutamine 56 are compositionally biased toward low complexity. The span at glutamate 495–glycine 504 shows a compositional bias: acidic residues. The span at leucine 680–alanine 690 shows a compositional bias: low complexity. Acidic residues predominate over residues alanine 691–aspartate 708.

Belongs to the flagellar radial spoke RSP4/6 family. Component of the axonemal radial spoke 1 (RS1) and 2 (RS2) complexes, at least composed of spoke head proteins RSPH1, RSPH3, RSPH9 and the cilia-specific component RSPH4A or sperm-specific component RSPH6A, spoke stalk proteins RSPH14, DNAJB13, DYDC1, ROPN1L and NME5, and the RS1 complex-specific anchor protein IQUB. Interacts with RSPH1. Interacts with RSPH3B. Interacts with RSPH4A. Interacts with RSPH9. Interacts with RSPH10B. In terms of processing, phosphorylated by PKA. Phosphorylation increases in capacitated sperm. In terms of tissue distribution, expressed in sperm and testis (at protein level).

It localises to the cytoplasm. The protein resides in the cytoskeleton. Its subcellular location is the flagellum axoneme. Functions as part of radial spoke complexes in the axoneme of sperm flagella that play an important part in motility. The triple radial spokes (RS1, RS2 and RS3) are required to modulate beating of the sperm flagellum. The protein is Radial spoke head protein 6 homolog A of Mus musculus (Mouse).